Reading from the N-terminus, the 332-residue chain is Ribosomal RNA small subunit methyltransferase C (332 aa).

Belongs to the methyltransferase superfamily. RsmC family. In terms of assembly, monomer.

Its subcellular location is the cytoplasm. The catalysed reaction is guanosine(1207) in 16S rRNA + S-adenosyl-L-methionine = N(2)-methylguanosine(1207) in 16S rRNA + S-adenosyl-L-homocysteine + H(+). Specifically methylates the guanine in position 1207 of 16S rRNA in the 30S particle. This Pseudomonas putida (strain ATCC 700007 / DSM 6899 / JCM 31910 / BCRC 17059 / LMG 24140 / F1) protein is Ribosomal RNA small subunit methyltransferase C.